We begin with the raw amino-acid sequence, 216 residues long: MSEKPSLSIMHPWHGPILTQDNYESLCCYIEITPQDSVKFELDKATGLLKVDRPQKFSNFCPCLYGLLPRTYCGELSGKYSGEQSLKENIQGDDDPLDICVLTEKNITHGNILLQARPIGGLRIIDSGEADDKIIAVLEDDLVFSEIQDISDCPCTVLDMIQHYFLTYKASPEHLIHGKPAKIEIVGIYGKKEAQKVIELAHQDYLNKFCREKTTI.

K39, R53, and Y65 together coordinate substrate. Mg(2+) is bound by residues D93, D98, and D131. Y168 contributes to the substrate binding site.

The protein belongs to the PPase family. As to quaternary structure, homohexamer. The cofactor is Mg(2+).

It localises to the cytoplasm. It catalyses the reaction diphosphate + H2O = 2 phosphate + H(+). Functionally, catalyzes the hydrolysis of inorganic pyrophosphate (PPi) forming two phosphate ions. The sequence is that of Inorganic pyrophosphatase from Chlamydia caviae (strain ATCC VR-813 / DSM 19441 / 03DC25 / GPIC) (Chlamydophila caviae).